Here is a 376-residue protein sequence, read N- to C-terminus: CC-adding tRNA nucleotidyltransferase (376 aa).

Residue 26–29 (GAVR) participates in CTP binding. Mg(2+) is bound by residues D39 and D41. CTP-binding positions include 94–95 (RD), N99, 136–145 (DPLRMLRAAR), and R176.

The protein belongs to the tRNA nucleotidyltransferase/poly(A) polymerase family. Mg(2+) serves as cofactor.

The enzyme catalyses a tRNA precursor + 2 CTP = a tRNA with a 3' CC end + 2 diphosphate. Functionally, tRNA nucleotidyltransferase involved in the synthesis of the tRNA CCA terminus. Adds the two cytidine residues to tRNA. In Shouchella clausii (strain KSM-K16) (Alkalihalobacillus clausii), this protein is CC-adding tRNA nucleotidyltransferase.